Consider the following 235-residue polypeptide: Protein GrpE (235 aa).

Polar residues predominate over residues 1–18; it reads MTDGNQKPDGNSGEQVTV. Disordered stretches follow at residues 1–50 and 198–235; these read MTDG…DAAH and ESVD…PSGS. The segment covering 19–35 has biased composition (basic and acidic residues); sequence TDKRRIDPETGEVRHVP.

This sequence belongs to the GrpE family. In terms of assembly, homodimer.

The protein localises to the cytoplasm. Its function is as follows. Participates actively in the response to hyperosmotic and heat shock by preventing the aggregation of stress-denatured proteins, in association with DnaK and GrpE. It is the nucleotide exchange factor for DnaK and may function as a thermosensor. Unfolded proteins bind initially to DnaJ; upon interaction with the DnaJ-bound protein, DnaK hydrolyzes its bound ATP, resulting in the formation of a stable complex. GrpE releases ADP from DnaK; ATP binding to DnaK triggers the release of the substrate protein, thus completing the reaction cycle. Several rounds of ATP-dependent interactions between DnaJ, DnaK and GrpE are required for fully efficient folding. The polypeptide is Protein GrpE (Mycobacterium bovis (strain BCG / Pasteur 1173P2)).